A 426-amino-acid polypeptide reads, in one-letter code: 3',5'-cyclic-nucleotide phosphodiesterase (426 aa).

The interval 210–229 (DKEDAQHHSNSNSNSNNIWG) is disordered.

The protein belongs to the cyclic nucleotide phosphodiesterase class-II family.

It carries out the reaction a nucleoside 3',5'-cyclic phosphate + H2O = a nucleoside 5'-phosphate + H(+). This Candida albicans (Yeast) protein is 3',5'-cyclic-nucleotide phosphodiesterase (PDE1).